Consider the following 311-residue polypeptide: Glycosyltransferase 6 domain-containing protein 1 (311 aa).

The Cytoplasmic portion of the chain corresponds to 1–5; that stretch reads MKAKR. Residues 6–26 traverse the membrane as a helical; Signal-anchor for type II membrane protein segment; the sequence is RILLQLLTFCLFLLLLAKIHF. Topologically, residues 27–311 are lumenal; the sequence is RNHQEEELLL…KIAHHPIDTL (285 aa). An N-linked (GlcNAc...) asparagine glycan is attached at Asn77. Substrate is bound by residues 85-90, 176-178, and 198-201; these read FAVGSL, NIN, and HPWW. Glu266 acts as the Nucleophile in catalysis.

Belongs to the glycosyltransferase 6 family. Requires Mn(2+) as cofactor.

The protein localises to the membrane. This is Glycosyltransferase 6 domain-containing protein 1 (Glt6d1) from Mus musculus (Mouse).